A 296-amino-acid polypeptide reads, in one-letter code: Protoheme IX farnesyltransferase (296 aa).

The next 9 membrane-spanning stretches (helical) occupy residues Ile-27–His-47, Pro-48–Leu-68, Ala-98–Asn-118, Val-120–Leu-140, Ile-148–Gly-168, Leu-175–Leu-195, His-219–Ala-239, Val-242–Leu-262, and Cys-274–Leu-294.

This sequence belongs to the UbiA prenyltransferase family. Protoheme IX farnesyltransferase subfamily.

The protein resides in the cell inner membrane. It carries out the reaction heme b + (2E,6E)-farnesyl diphosphate + H2O = Fe(II)-heme o + diphosphate. It participates in porphyrin-containing compound metabolism; heme O biosynthesis; heme O from protoheme: step 1/1. Its function is as follows. Converts heme B (protoheme IX) to heme O by substitution of the vinyl group on carbon 2 of heme B porphyrin ring with a hydroxyethyl farnesyl side group. The polypeptide is Protoheme IX farnesyltransferase (Anaplasma phagocytophilum (strain HZ)).